A 423-amino-acid polypeptide reads, in one-letter code: Serine--tRNA ligase (423 aa).

L-serine is bound at residue 231–233; that stretch reads TAE. ATP is bound at residue 262–264; sequence RSE. Glutamate 285 lines the L-serine pocket. Residue 349–352 participates in ATP binding; it reads EISS. Serine 384 is an L-serine binding site.

This sequence belongs to the class-II aminoacyl-tRNA synthetase family. Type-1 seryl-tRNA synthetase subfamily. In terms of assembly, homodimer. The tRNA molecule binds across the dimer.

The protein localises to the cytoplasm. The catalysed reaction is tRNA(Ser) + L-serine + ATP = L-seryl-tRNA(Ser) + AMP + diphosphate + H(+). It catalyses the reaction tRNA(Sec) + L-serine + ATP = L-seryl-tRNA(Sec) + AMP + diphosphate + H(+). It functions in the pathway aminoacyl-tRNA biosynthesis; selenocysteinyl-tRNA(Sec) biosynthesis; L-seryl-tRNA(Sec) from L-serine and tRNA(Sec): step 1/1. Functionally, catalyzes the attachment of serine to tRNA(Ser). Is also able to aminoacylate tRNA(Sec) with serine, to form the misacylated tRNA L-seryl-tRNA(Sec), which will be further converted into selenocysteinyl-tRNA(Sec). The polypeptide is Serine--tRNA ligase (Acinetobacter baylyi (strain ATCC 33305 / BD413 / ADP1)).